We begin with the raw amino-acid sequence, 446 residues long: Neuropeptide Y receptor type 5 (446 aa).

The Extracellular segment spans residues M1–Y42. 2 N-linked (GlcNAc...) asparagine glycosylation sites follow: N10 and N17. A helical transmembrane segment spans residues F43–L63. The Cytoplasmic portion of the chain corresponds to M64–N77. The chain crosses the membrane as a helical span at residues F78–T98. The Extracellular segment spans residues L99–M117. An intrachain disulfide couples C114 to C198. The helical transmembrane segment at P118–V138 threads the bilayer. Topologically, residues R139–G156 are cytoplasmic. A helical transmembrane segment spans residues Y157–F177. Topologically, residues H178–R208 are extracellular. A helical transmembrane segment spans residues I209–V229. Residues S230–R369 lie on the Cytoplasmic side of the membrane. Residues R297–P325 are disordered. A helical membrane pass occupies residues L370–V390. Topologically, residues T391–Y407 are extracellular. A helical transmembrane segment spans residues C408–L428. The Cytoplasmic segment spans residues N429–S446. C442 is lipidated: S-palmitoyl cysteine.

This sequence belongs to the G-protein coupled receptor 1 family.

Its subcellular location is the cell membrane. Receptor for neuropeptide Y and peptide YY. The activity of this receptor is mediated by G proteins that inhibit adenylate cyclase activity. Seems to be associated with food intake. Could be involved in feeding disorders. This Sus scrofa (Pig) protein is Neuropeptide Y receptor type 5 (NPY5R).